The sequence spans 592 residues: Threonine--tRNA ligase (592 aa).

Positions 193–488 (DHRKLGPALG…LIEHYGGAFP (296 aa)) are catalytic. Residues C284, H335, and H465 each coordinate Zn(2+).

This sequence belongs to the class-II aminoacyl-tRNA synthetase family. As to quaternary structure, homodimer. Zn(2+) serves as cofactor.

It localises to the cytoplasm. The enzyme catalyses tRNA(Thr) + L-threonine + ATP = L-threonyl-tRNA(Thr) + AMP + diphosphate + H(+). Its function is as follows. Catalyzes the attachment of threonine to tRNA(Thr) in a two-step reaction: L-threonine is first activated by ATP to form Thr-AMP and then transferred to the acceptor end of tRNA(Thr). Also edits incorrectly charged L-seryl-tRNA(Thr). This Treponema pallidum (strain Nichols) protein is Threonine--tRNA ligase.